We begin with the raw amino-acid sequence, 483 residues long: Zinc metalloproteinase/disintegrin (483 aa).

The signal sequence occupies residues 1 to 20 (MIQVLLVTLCLAAFPYQGNS). The propeptide occupies 21–191 (IILESGNVND…KASQLNLTPE (171 aa)). One can recognise a Peptidase M12B domain in the interval 198–394 (RYIELVVVAD…HNPQCMLNEP (197 aa)). 2 residues coordinate Ca(2+): Glu201 and Asp285. 3 disulfide bridges follow: Cys309-Cys389, Cys349-Cys373, and Cys351-Cys356. His334 contacts Zn(2+). Residue Glu335 is part of the active site. Residues His338 and His344 each coordinate Zn(2+). Ca(2+)-binding residues include Cys389 and Asn392. Residues 395 to 414 (LRTDIVSTPVSGNELWETGE) constitute a propeptide that is removed on maturation. One can recognise a Disintegrin domain in the interval 402–483 (TPVSGNELWE…AGCPRNPFHA (82 aa)). 4 disulfides stabilise this stretch: Cys425–Cys448, Cys439–Cys445, Cys444–Cys469, and Cys457–Cys476. The short motif at 461–463 (KGD) is the Cell attachment site; atypical (KGD) element.

This sequence belongs to the venom metalloproteinase (M12B) family. P-II subfamily. P-IIe sub-subfamily. As to quaternary structure, heterodimer with piscivostatin-alpha; disulfide-linked (disintegrin). Zn(2+) serves as cofactor. Expressed by the venom gland.

It is found in the secreted. Its function is as follows. Impairs hemostasis in the envenomed animal. Functionally, inhibits platelet aggregation induced by ADP. Acts by inhibiting fibrinogen interaction with platelet receptors GPIIb/GPIIIa (ITGA2B/ITGB3). Also inhibits platelet aggregate dissociation in human platelet-rich plasma. The protein is Zinc metalloproteinase/disintegrin of Agkistrodon piscivorus piscivorus (Eastern cottonmouth).